A 245-amino-acid chain; its full sequence is DNA polymerase sliding clamp (245 aa).

Belongs to the PCNA family. As to quaternary structure, homotrimer. The subunits circularize to form a toroid; DNA passes through its center. Replication factor C (RFC) is required to load the toroid on the DNA.

In terms of biological role, sliding clamp subunit that acts as a moving platform for DNA processing. Responsible for tethering the catalytic subunit of DNA polymerase and other proteins to DNA during high-speed replication. The sequence is that of DNA polymerase sliding clamp from Methanosarcina barkeri (strain Fusaro / DSM 804).